A 314-amino-acid chain; its full sequence is tRNA dimethylallyltransferase (314 aa).

ATP is bound at residue 12–19 (GPTAAGKS). 14-19 (TAAGKS) provides a ligand contact to substrate. Interaction with substrate tRNA regions lie at residues 37-40 (DSAT), 161-165 (QRIQR), and 245-250 (RCVGYR).

This sequence belongs to the IPP transferase family. In terms of assembly, monomer. Mg(2+) serves as cofactor.

The enzyme catalyses adenosine(37) in tRNA + dimethylallyl diphosphate = N(6)-dimethylallyladenosine(37) in tRNA + diphosphate. Functionally, catalyzes the transfer of a dimethylallyl group onto the adenine at position 37 in tRNAs that read codons beginning with uridine, leading to the formation of N6-(dimethylallyl)adenosine (i(6)A). The polypeptide is tRNA dimethylallyltransferase (Bordetella petrii (strain ATCC BAA-461 / DSM 12804 / CCUG 43448)).